A 453-amino-acid polypeptide reads, in one-letter code: Vacuolar cation/proton exchanger 1b (453 aa).

Residues 1–67 lie on the Cytoplasmic side of the membrane; the sequence is MPVSRMMMES…LRSLLANLND (67 aa). Residues 68–85 form a helical membrane-spanning segment; the sequence is VLLTTRLFLLFPAVLLAI. The Extracellular segment spans residues 86–91; sequence AATYLH. The chain crosses the membrane as a helical span at residues 92 to 109; that stretch reads FGQVWVFVLSLIGLVPLA. Residues 110–126 are Cytoplasmic-facing; it reads ERLSFLTEQIAFYTGPT. The helical transmembrane segment at 127–147 threads the bilayer; sequence VGGLLNATFGNVTEVIIALLA. Residues 136–171 are cation selection; it reads GNVTEVIIALLALREGKIEVVKCSLLGSILSNLLLV. The Extracellular portion of the chain corresponds to 148–160; the sequence is LREGKIEVVKCSL. The helical transmembrane segment at 161–181 threads the bilayer; the sequence is LGSILSNLLLVLGTSLFLAGI. Residues 182-194 are Cytoplasmic-facing; sequence ANLRAHQPYDTKQ. A helical transmembrane segment spans residues 195 to 215; the sequence is AHVNTALLMLAVLCHSLPLML. The Extracellular segment spans residues 216 to 232; that stretch reads RYAVTSGDHAIVSGDAA. Residues 233–253 form a helical membrane-spanning segment; the sequence is LHLSRACSILMLIAYLAYLFF. The Cytoplasmic portion of the chain corresponds to 254–283; the sequence is QLNTHRQLFEPQQVEDDDDDDLVIAQDDEP. Residues 284–304 form a helical membrane-spanning segment; it reads VLGFSSAMIWLALMTLLTALL. The Extracellular portion of the chain corresponds to 305 to 327; the sequence is SGYVVSTIEAASESWELSVSFIS. The helical transmembrane segment at 328 to 348 threads the bilayer; sequence IILLPIVGNAAEHAGAVIFAL. The cation selection stretch occupies residues 335-370; that stretch reads GNAAEHAGAVIFALKNKMDITLGVSLGSATQISMFV. Residues 349-364 are Cytoplasmic-facing; sequence KNKMDITLGVSLGSAT. Residues 365–385 traverse the membrane as a helical segment; it reads QISMFVVPVSVIVAWTMGIPM. Topologically, residues 386-388 are extracellular; it reads DLD. The chain crosses the membrane as a helical span at residues 389–409; that stretch reads FNLLETGSLFLAILVTAFTLQ. Over 410-414 the chain is Cytoplasmic; the sequence is EGESH. Residues 415–435 traverse the membrane as a helical segment; that stretch reads YLKGLILVLCYAVISVCFFVI. Residues 436–453 are Extracellular-facing; it reads RRRSAGGTDGVHHLDVIV.

Belongs to the Ca(2+):cation antiporter (CaCA) (TC 2.A.19) family. Cation/proton exchanger (CAX) subfamily. Expressed in embryo and roots.

It localises to the vacuole membrane. Functionally, vacuolar cation/proton exchanger (CAX). Translocates Ca(2+) and other metal ions into vacuoles using the proton gradient formed by H(+)-ATPase and H(+)-pyrophosphatase. In Oryza sativa subsp. japonica (Rice), this protein is Vacuolar cation/proton exchanger 1b (CAX1b).